The following is a 619-amino-acid chain: Chaperone protein HscA homolog (619 aa).

Belongs to the heat shock protein 70 family.

Its function is as follows. Chaperone involved in the maturation of iron-sulfur cluster-containing proteins. Has a low intrinsic ATPase activity which is markedly stimulated by HscB. The sequence is that of Chaperone protein HscA homolog from Azotobacter vinelandii.